Consider the following 1025-residue polypeptide: Retinoblastoma-related protein (1025 aa).

The disordered stretch occupies residues 1–20 (MEDHPPKPSIPTADASLSNH). The domain A stretch occupies residues 422-623 (TPVTTAMTTA…EKGSSMYNSL (202 aa)). The interval 422–875 (TPVTTAMTTA…NEIFIPAVKP (454 aa)) is pocket. Residues 624 to 744 (TVARPALSAE…PGAGGETCAE (121 aa)) are spacer. The tract at residues 745 to 875 (TAINVFFSKI…NEIFIPAVKP (131 aa)) is domain B.

Belongs to the retinoblastoma protein (RB) family.

The protein localises to the nucleus. Its function is as follows. Regulator of biological processes that recruits a histone deacetylase to control gene transcription. May play a role in the entry into mitosis, negatively regulating the cell proliferation. Formation of stable complexes with geminiviridae replication-associated proteins may create a cellular environment which favors viral DNA replication. In Camellia sinensis (Tea plant), this protein is Retinoblastoma-related protein (pRB).